The following is a 145-amino-acid chain: VHLTDQEIKYINAIWSKVDYKQVGGEALARLLIVYPWTQRYFSTFGNLASADAISHNSKVIAHGEKVLRSIGEALKHLDNLKGYAKLSQYHSEKLHVDPANFVRFGGVVVIVLAHHFHEEFTPEVQAAFEKAFGGVADAVGKGYH.

One can recognise a Globin domain in the interval 2-145 (HLTDQEIKYI…VADAVGKGYH (144 aa)). 2 residues coordinate heme b: His-63 and His-91.

Belongs to the globin family. Red blood cells.

The polypeptide is Hemoglobin subunit beta-2 (Telmatobius peruvianus (Andean frog)).